The following is a 448-amino-acid chain: Glucose-6-phosphate isomerase (448 aa).

Glutamate 290 functions as the Proton donor in the catalytic mechanism. Active-site residues include histidine 311 and lysine 425.

It belongs to the GPI family.

The protein localises to the cytoplasm. The catalysed reaction is alpha-D-glucose 6-phosphate = beta-D-fructose 6-phosphate. Its pathway is carbohydrate biosynthesis; gluconeogenesis. It functions in the pathway carbohydrate degradation; glycolysis; D-glyceraldehyde 3-phosphate and glycerone phosphate from D-glucose: step 2/4. Its function is as follows. Catalyzes the reversible isomerization of glucose-6-phosphate to fructose-6-phosphate. The polypeptide is Glucose-6-phosphate isomerase (Lactococcus lactis subsp. cremoris (strain SK11)).